We begin with the raw amino-acid sequence, 1221 residues long: X-linked retinitis pigmentosa GTPase regulator-interacting protein 1 (1221 aa).

2 stretches are compositionally biased toward polar residues: residues 1–15 and 88–97; these read MIPT…TQPP and GGTAPSSTSV. 3 disordered regions span residues 1–22, 68–107, and 119–196; these read MIPT…MTRD, AEAA…SCSS, and SLAS…PEKM. 2 stretches are compositionally biased toward basic and acidic residues: residues 134-147 and 155-168; these read HRAE…RDRL and FKEH…RGEV. The stretch at 267-533 forms a coiled coil; it reads LGAAHNALLS…EEQLKDVAYG (267 aa). The 121-residue stretch at 723–843 folds into the C2 domain; it reads QKDEPRSGTW…AQNKSIQGDF (121 aa). Residues 869 to 947 are disordered; sequence PENFPKPEAQ…YSRRKHGRKT (79 aa). The span at 903-914 shows a compositional bias: polar residues; that stretch reads QMVSIDTPTEAG. Positions 1027–1216 are interaction with RPGR; the sequence is SEAQTTDSDE…ALQAIYKEMT (190 aa).

The protein belongs to the RPGRIP1 family. Forms homodimers and elongated homopolymers. Interacts with NPHP4. Interacts with NEK4. Interacts with RPGR. Interacts with SPATA7. Interacts with CEP290/NPHP6; mediating the association between RPGR and CEP290/NPHP6. In terms of tissue distribution, retina, brain, skeletal muscle and kidney. Colocalizes with RGPR in the outer segment of rod photoreceptors and cone outer segments.

The protein resides in the cell projection. It localises to the cilium. Functionally, may function as scaffolding protein. Required for normal location of RPGR at the connecting cilium of photoreceptor cells. Required for normal disk morphogenesis and disk organization in the outer segment of photoreceptor cells and for survival of photoreceptor cells. This chain is X-linked retinitis pigmentosa GTPase regulator-interacting protein 1 (RPGRIP1), found in Bos taurus (Bovine).